A 1235-amino-acid chain; its full sequence is Myosin-1 (1235 aa).

Positions 1–34 are disordered; it reads MGITKRSKDKAARAERSAGGDKSSSAKPKKATFD. The span at 9–19 shows a compositional bias: basic and acidic residues; the sequence is DKAARAERSAG. The region spanning 41–715 is the Myosin motor domain; it reads IGVSDLTLLS…TLFALEHMRD (675 aa). ATP is bound at residue 134 to 141; that stretch reads GESGAGKT. Residues 405–487 are actin-binding; that stretch reads SIGILDIYGF…PGIFSAMKDA (83 aa). 2 IQ domains span residues 719 to 739 and 740 to 765; these read HNMATRIQRMWRAYLAYRAEA and AIRIQRIWRKKRVGAEYLQLREEGHK. One can recognise a TH1 domain in the interval 773 to 962; the sequence is RRRMSILGSR…TVHTQPGEPP (190 aa). Disordered regions lie at residues 949–1076 and 1135–1235; these read YKSS…AAKP and APPV…EDDW. Residues 982–1046 show a composition bias toward low complexity; that stretch reads KGKLIKPGGP…PGAAATPAAA (65 aa). Residues 1050 to 1062 show a composition bias toward polar residues; sequence PSHTRQQSSTSTV. Over residues 1063 to 1073 the composition is skewed to pro residues; it reads RPPPPPPPAPA. In terms of domain architecture, SH3 spans 1075 to 1134; it reads KPKIMAKVLYDFAGTRENELSIKAGDMIEIVQKENNGWWLAKTPEGQAWVPAAYVEEQAP. Pro residues predominate over residues 1135-1150; that stretch reads APPVVAPRPPPPPPPA. Positions 1180–1210 are enriched in polar residues; that stretch reads SLQNRDSGMSLNGANGSGSDASRSSTPTPSI.

Belongs to the TRAFAC class myosin-kinesin ATPase superfamily. Myosin family.

It localises to the cytoplasm. The protein localises to the cytoskeleton. The protein resides in the actin patch. Type-I myosin implicated in the organization of the actin cytoskeleton. Required for proper actin cytoskeleton polarization. At the cell cortex, assembles in patch-like structures together with proteins from the actin-polymerizing machinery and promotes actin assembly. Functions as actin nucleation-promoting factor (NPF) for the Arp2/3 complex. In Neurospora crassa (strain ATCC 24698 / 74-OR23-1A / CBS 708.71 / DSM 1257 / FGSC 987), this protein is Myosin-1 (myo-1).